We begin with the raw amino-acid sequence, 505 residues long: Maturase K (505 aa).

It belongs to the intron maturase 2 family. MatK subfamily.

It localises to the plastid. Its subcellular location is the chloroplast. In terms of biological role, usually encoded in the trnK tRNA gene intron. Probably assists in splicing its own and other chloroplast group II introns. The polypeptide is Maturase K (Rhizophora stylosa (Bakau)).